The chain runs to 400 residues: Mu-type opioid receptor (400 aa).

The Extracellular segment spans residues 1 to 68 (MDSSAVPANA…CPPTGSPSMI (68 aa)). N-linked (GlcNAc...) asparagine glycans are attached at residues asparagine 9, asparagine 12, asparagine 33, asparagine 40, and asparagine 48. A helical membrane pass occupies residues 69-93 (TAITIMALYSIVCVVGLFGNFLVMY). At 94–106 (VIVRYTKMKTATN) the chain is on the cytoplasmic side. The chain crosses the membrane as a helical span at residues 107-131 (IYIFNLALADALATSTLPFQSVNYL). Over 132 to 142 (MGTWPFGTILC) the chain is Extracellular. A disulfide bridge links cysteine 142 with cysteine 219. Residues 143-165 (KIVISIDYYNMFTSIFTLCTMSV) traverse the membrane as a helical segment. Over 166 to 185 (DRYIAVCHPVKALDFRTPRN) the chain is Cytoplasmic. Tyrosine 168 carries the phosphotyrosine modification. A helical membrane pass occupies residues 186–207 (AKIVNVCNWIISSAIGLPVMFM). Residues 208–230 (ATTKYRQGSIDCTLTFSHPTWYW) are Extracellular-facing. Residues 231-255 (ENLLKICVFIFAFIMPVLIITVCYG) traverse the membrane as a helical segment. Topologically, residues 256–279 (LMILRLKSVRMLSGSKEKDRNLRR) are cytoplasmic. Residues 280–306 (ITRMVLVVVAVFIVCWTPIHIYVIIKA) traverse the membrane as a helical segment. The Extracellular portion of the chain corresponds to 307–314 (LVTIPETT). A helical membrane pass occupies residues 315–338 (FQTVSWHFCIALGYTNSCLNPVLY). Residues 334–338 (NPVLY) carry the NPxxY; plays a role in stabilizing the activated conformation of the receptor motif. Topologically, residues 339–400 (AFLDENFKRC…NLEAETAPLP (62 aa)) are cytoplasmic. A lipid anchor (S-palmitoyl cysteine) is attached at cysteine 353. The residue at position 365 (serine 365) is a Phosphoserine. Phosphothreonine is present on threonine 372. At serine 377 the chain carries Phosphoserine. Threonine 396 is subject to Phosphothreonine.

This sequence belongs to the G-protein coupled receptor 1 family. As to quaternary structure, forms homooligomers and heterooligomers with other GPCRs, such as OPRD1, OPRK1, OPRL1, NPFFR2, ADRA2A, SSTR2, CNR1 and CCR5 (probably in dimeric forms). Interacts with heterotrimeric G proteins; interaction with a heterotrimeric complex containing GNAI1, GNB1 and GNG2 stabilizes the active conformation of the receptor and increases its affinity for endomorphin-2, the synthetic opioid peptide DAMGO and for morphinan agonists. Interacts with PPL; the interaction disrupts agonist-mediated G-protein activation. Interacts (via C-terminus) with DNAJB4 (via C-terminus). Interacts with calmodulin; the interaction inhibits the constitutive activity of OPRM1; it abolishes basal and attenuates agonist-stimulated G-protein coupling. Interacts with FLNA, PLD2, RANBP9 and WLS and GPM6A. Interacts with RTP4. Interacts with SYP and GNAS. Interacts with RGS9, RGS17, RGS20, RGS4, PPP1R9B and HINT1. Post-translationally, phosphorylated. Differentially phosphorylated in basal and agonist-induced conditions. Agonist-mediated phosphorylation modulates receptor internalization. Phosphorylated by GRK2 in a agonist-dependent manner. Phosphorylation at Tyr-168 requires receptor activation, is dependent on non-receptor protein tyrosine kinase Src and results in a decrease in agonist efficacy by reducing G-protein coupling efficiency. Phosphorylated on tyrosine residues; the phosphorylation is involved in agonist-induced G-protein-independent receptor down-regulation. Phosphorylation at Ser-377 is involved in G-protein-dependent but not beta-arrestin-dependent activation of the ERK pathway. Ubiquitinated. A basal ubiquitination seems not to be related to degradation. Ubiquitination is increased upon formation of OPRM1:OPRD1 oligomers leading to proteasomal degradation; the ubiquitination is diminished by RTP4.

It is found in the cell membrane. The protein resides in the cell projection. It localises to the axon. Its subcellular location is the perikaryon. The protein localises to the dendrite. It is found in the endosome. Receptor for endogenous opioids such as beta-endorphin and endomorphin. Receptor for natural and synthetic opioids including morphine, heroin, DAMGO, fentanyl, etorphine, buprenorphin and methadone. Also activated by enkephalin peptides, such as Met-enkephalin or Met-enkephalin-Arg-Phe, with higher affinity for Met-enkephalin-Arg-Phe. Agonist binding to the receptor induces coupling to an inactive GDP-bound heterotrimeric G-protein complex and subsequent exchange of GDP for GTP in the G-protein alpha subunit leading to dissociation of the G-protein complex with the free GTP-bound G-protein alpha and the G-protein beta-gamma dimer activating downstream cellular effectors. The agonist- and cell type-specific activity is predominantly coupled to pertussis toxin-sensitive G(i) and G(o) G alpha proteins, GNAI1, GNAI2, GNAI3 and GNAO1, and to a lesser extent to pertussis toxin-insensitive G alpha proteins GNAZ and GNA15. They mediate an array of downstream cellular responses, including inhibition of adenylate cyclase activity and both N-type and L-type calcium channels, activation of inward rectifying potassium channels, mitogen-activated protein kinase (MAPK), phospholipase C (PLC), phosphoinositide/protein kinase (PKC), phosphoinositide 3-kinase (PI3K) and regulation of NF-kappa-B. Also couples to adenylate cyclase stimulatory G alpha proteins. The selective temporal coupling to G-proteins and subsequent signaling can be regulated by RGSZ proteins, such as RGS9, RGS17 and RGS4. Phosphorylation by members of the GPRK subfamily of Ser/Thr protein kinases and association with beta-arrestins is involved in short-term receptor desensitization. Beta-arrestins associate with the GPRK-phosphorylated receptor and uncouple it from the G-protein thus terminating signal transduction. The phosphorylated receptor is internalized through endocytosis via clathrin-coated pits which involves beta-arrestins. The activation of the ERK pathway occurs either in a G-protein-dependent or a beta-arrestin-dependent manner and is regulated by agonist-specific receptor phosphorylation. Acts as a class A G-protein coupled receptor (GPCR) which dissociates from beta-arrestin at or near the plasma membrane and undergoes rapid recycling. Receptor down-regulation pathways are varying with the agonist and occur dependent or independent of G-protein coupling. Endogenous ligands induce rapid desensitization, endocytosis and recycling. Heterooligomerization with other GPCRs can modulate agonist binding, signaling and trafficking properties. Involved in neurogenesis. The polypeptide is Mu-type opioid receptor (OPRM1) (Saimiri boliviensis boliviensis (Bolivian squirrel monkey)).